The sequence spans 376 residues: MENQYQRIVSATAREDSQARRSKPLFLNAWSQTSSVDFEVLRSISAPDPQVEVENRALRDKVRYLEAKLQQHKDLLSQIHATSARMQQASSLLAESRPPTPPAVQSHHILTPPSSEICAPAQNPQILDYKIISAPDDADAIEIRLAAESLNSLSTSADSDRLEICLGDENHQQSNHHNSQQQYRISNGIKRDGSSESADTPLQFIKRRKLQEIQLQEEIPRQNIKLPAKPQVKARNGSFTDLNKGQQQNMDNVMVSIGPNNTCVPASVFENINWSVCSLATRKLLVTIFDRETLATHSMTGKPSPAFKDQDKPLKRMLDPGKIQDIIFAVTHKCNASEKEVRNAITTKCADENKMMKIQNVKRRSSGIKHEKENII.

Residues 50–79 (QVEVENRALRDKVRYLEAKLQQHKDLLSQI) adopt a coiled-coil conformation. One can recognise a BEN domain in the interval 258–356 (GPNNTCVPAS…TKCADENKMM (99 aa)).

Homodimer. Interacts (via BEN domain) with Su(H). Interacts with Cp190.

Its subcellular location is the nucleus. Functionally, can act as both a transcriptional repressor and corepressor. Represses the expression of genes involved in neural development and preferentially binds palindromic sequence 5'-CCAATTGG-3' to mediate transcriptional repression. Acts as a corepressor for suppressor of hairless (Su(H)) and inhibits Notch signaling during peripheral nervous system development. The protein is Protein insensitive (insv) of Drosophila melanogaster (Fruit fly).